Here is a 465-residue protein sequence, read N- to C-terminus: Chromosomal replication initiator protein DnaA (465 aa).

A domain I, interacts with DnaA modulators region spans residues 1–72; that stretch reads MRTKQLWQVA…ETLSLLLGRP (72 aa). Residues 72-117 are domain II; sequence PIAVHFTVHGQDDEEHPVQRRPQRRALASEEGSASKQLSLTPSPEH. Positions 80-118 are disordered; sequence HGQDDEEHPVQRRPQRRALASEEGSASKQLSLTPSPEHG. Polar residues predominate over residues 103 to 113; it reads GSASKQLSLTP. A domain III, AAA+ region region spans residues 118-334; it reads GLNPRYTFEK…GALNRIVALA (217 aa). 4 residues coordinate ATP: G162, G164, K165, and T166. The segment at 335–465 is domain IV, binds dsDNA; that stretch reads QLTHQPITLA…DAKAPLASRH (131 aa).

It belongs to the DnaA family. In terms of assembly, oligomerizes as a right-handed, spiral filament on DNA at oriC.

Its subcellular location is the cytoplasm. Its function is as follows. Plays an essential role in the initiation and regulation of chromosomal replication. ATP-DnaA binds to the origin of replication (oriC) to initiate formation of the DNA replication initiation complex once per cell cycle. Binds the DnaA box (a 9 base pair repeat at the origin) and separates the double-stranded (ds)DNA. Forms a right-handed helical filament on oriC DNA; dsDNA binds to the exterior of the filament while single-stranded (ss)DNA is stabiized in the filament's interior. The ATP-DnaA-oriC complex binds and stabilizes one strand of the AT-rich DNA unwinding element (DUE), permitting loading of DNA polymerase. After initiation quickly degrades to an ADP-DnaA complex that is not apt for DNA replication. Binds acidic phospholipids. The polypeptide is Chromosomal replication initiator protein DnaA (Thermomicrobium roseum (strain ATCC 27502 / DSM 5159 / P-2)).